Consider the following 576-residue polypeptide: Nuclear/nucleolar GTPase 2 (576 aa).

2 disordered regions span residues 1–61 and 166–186; these read MVKK…SNEY and QDAFEEKNGAGPSGEGGEEED. Positions 16-34 are enriched in basic and acidic residues; it reads HSLDANRADGKKKTTETRS. A compositionally biased stretch (basic residues) spans 42–52; the sequence is KMYKTRPKRNA. The CP-type G domain occupies 206-367; sequence WGELYKVIDS…LIDCPGVVYQ (162 aa). The DARXP motif signature appears at 224-228; sequence DARDP. The segment at 254-257 is G4; it reads NKCD. 254–257 contacts GTP; it reads NKCD. Positions 283 to 285 are G5; the sequence is SVN. The segment at 316 to 323 is G1; the sequence is GYPNVGKS. GTP is bound at residue 319–324; that stretch reads NVGKSS. Positions 342–346 are G2; it reads GETKV. The segment at 360–363 is G3; that stretch reads DCPG. Glycine 363 provides a ligand contact to GTP. Residues 502 to 576 are disordered; sequence TQQQKDVPVQ…DEEDESDSAE (75 aa). Residues 509 to 530 are compositionally biased toward basic and acidic residues; that stretch reads PVQRDFYDEKDLKDDKKAKEST. Residues 531-576 are compositionally biased toward acidic residues; sequence ETDAENGTDAEEDEDAVSEDGVESDSDADEDAVSENDEEDESDSAE.

It belongs to the TRAFAC class YlqF/YawG GTPase family. RsgA subfamily. As to quaternary structure, interacts with the 60S ribosomal proteins RPL10AA, RPL10AB and RPL10AC. Ubiquitous, with higher levels in meristematic regions.

Its subcellular location is the nucleus. The protein localises to the nucleolus. The GTPase activity is stimulated in the presence of the 60S ribosomal subunit. In terms of biological role, GTPase involved in pre-60S ribosomal subunit maturation. The protein is Nuclear/nucleolar GTPase 2 of Arabidopsis thaliana (Mouse-ear cress).